The following is a 410-amino-acid chain: Lissencephaly-1 homolog (410 aa).

Positions 7-39 (QRDELNRAIADYLRSNGYEEAYSVFKKEAELDV) constitute a LisH domain. Residues 56–82 (TSVIRLQKKVMELESKLNEAKEEFTSG) adopt a coiled-coil conformation. WD repeat units follow at residues 106-147 (GHRS…RTLK), 148-187 (GHTDSVQDISFDHTGKLLASCSADMTIKLWDFQGFECIRT), 190-229 (GHDHNVSSVAIMPNGDHIVSASRDKTIKMWEVQTGYCVKT), 232-271 (GHREWVRMVRPNQDGTLIASCSNDQTVRVWVVATKECKAE), 274-333 (EHEH…CLMT), 336-377 (GHDN…KTLN), and 378-410 (AHEHFVTSLDFHKTAPYVVTGSVDQTVKVWECR).

Belongs to the WD repeat LIS1/nudF family. In terms of assembly, can self-associate. Component of the cytosolic PAF-AH (I) heterotetrameric enzyme, which is composed of PAFAH1B1 (beta), PAFAH1B2 (alpha2) and PAFAH1B3 (alpha1) subunits. The catalytic activity of the enzyme resides in the alpha1 (PAFAH1B3) and alpha2 (PAFAH1B2) subunits, whereas the beta subunit (PAFAH1B1) has regulatory activity. Trimer formation is not essential for the catalytic activity. Interacts with dynein, dynactin, NDE1 and NDEL1.

The protein localises to the cytoplasm. Its subcellular location is the cytoskeleton. The protein resides in the microtubule organizing center. It is found in the centrosome. In terms of biological role, regulatory subunit (beta subunit) of the cytosolic type I platelet-activating factor (PAF) acetylhydrolase (PAF-AH (I)), an enzyme that catalyzes the hydrolyze of the acetyl group at the sn-2 position of PAF and its analogs and participates in PAF inactivation. Regulates the PAF-AH (I) activity in a catalytic dimer composition-dependent manner. Positively regulates the activity of the minus-end directed microtubule motor protein dynein. May enhance dynein-mediated microtubule sliding by targeting dynein to the microtubule plus end. Required for several dynein- and microtubule-dependent processes such as the maintenance of Golgi integrity, the peripheral transport of microtubule fragments and the coupling of the nucleus and centrosome. May be required for proliferation of neuronal precursors and neuronal migration. The chain is Lissencephaly-1 homolog from Gallus gallus (Chicken).